The chain runs to 256 residues: Floral homeotic protein APETALA 1-1 (256 aa).

In terms of domain architecture, MADS-box spans 1-61 (MGRGRVQLKR…GKLFEYSTDS (61 aa)). The K-box domain maps to 88 to 178 (NTNWSMEYNR…SKQIKEREKV (91 aa)).

As to quaternary structure, homodimer capable of binding to CArG-box sequences. Expressed in some of the meristems of arrest-stage broccoli heads.

It is found in the nucleus. Its function is as follows. Transcription factor that promotes early floral meristem identity in synergy with LEAFY. Displays a redundant function with CAULIFLOWER in the up-regulation of LEAFY. Required subsequently for the transition of an inflorescence meristem into a floral meristem, and for the normal development of sepals and petals in flowers. Regulates positively B class homeotic proteins. In Brassica oleracea var. italica (Broccoli), this protein is Floral homeotic protein APETALA 1-1 (1AP1).